Reading from the N-terminus, the 76-residue chain is Omega-conotoxin-like TxMKLT1-0211 (76 aa).

Residues 1 to 22 form the signal peptide; that stretch reads MKLTCMMIVAVLFLTAWTFVTA. Positions 23 to 52 are excised as a propeptide; sequence VPHSSNALENLYLKAHHEMNNPEDSELNKR. 3 disulfides stabilise this stretch: C53-C67, C60-C71, and C66-C75.

The protein belongs to the conotoxin O1 superfamily. Expressed by the venom duct.

The protein localises to the secreted. Omega-conotoxins act at presynaptic membranes, they bind and block voltage-gated calcium channels (Cav). The chain is Omega-conotoxin-like TxMKLT1-0211 from Conus textile (Cloth-of-gold cone).